Consider the following 365-residue polypeptide: Pre-mRNA-splicing factor srp2 (365 aa).

2 consecutive RRM domains span residues 6-69 and 100-166; these read LFVG…RIVV and LIVE…AVTL. The segment at 166 to 365 is disordered; the sequence is LREDPDAANE…SAEGQVAAEW (200 aa). Residues 184-194 show a composition bias toward basic residues; the sequence is FRSRSPPARRR. Phosphoserine is present on residues Ser-186, Ser-188, Ser-276, Ser-294, Ser-296, Ser-298, and Ser-308. A compositionally biased stretch (basic and acidic residues) spans 195 to 307; it reads YRDDYRRGGD…SPRRDREENR (113 aa). A compositionally biased stretch (low complexity) spans 316 to 332; it reads SYSAAPEASMESSAPTE. The span at 341–353 shows a compositional bias: polar residues; it reads EEQQPLQNHSDVG.

It belongs to the splicing factor SR family. Extensively phosphorylated on serine residues in the RS domain.

It is found in the nucleus. Functionally, has a role in pre-mRNA splicing where it is involved in spliceosome assembly. This is Pre-mRNA-splicing factor srp2 (srp2) from Schizosaccharomyces pombe (strain 972 / ATCC 24843) (Fission yeast).